The sequence spans 205 residues: Holliday junction branch migration complex subunit RuvA (205 aa).

Residues 1–64 (MIGRLRGVLV…EDAQLLYGFI (64 aa)) form a domain I region. A domain II region spans residues 65-143 (TKQERALFRL…SLLETSAGSE (79 aa)). Residues 144–156 (REFMLKSNYTPAP) form a flexible linker region. Positions 157-205 (VVNTAEEDAIAALLSLGYKPAQASKAVSAAFKEGMSSEDLIKSSLKSML) are domain III.

The protein belongs to the RuvA family. Homotetramer. Forms an RuvA(8)-RuvB(12)-Holliday junction (HJ) complex. HJ DNA is sandwiched between 2 RuvA tetramers; dsDNA enters through RuvA and exits via RuvB. An RuvB hexamer assembles on each DNA strand where it exits the tetramer. Each RuvB hexamer is contacted by two RuvA subunits (via domain III) on 2 adjacent RuvB subunits; this complex drives branch migration. In the full resolvosome a probable DNA-RuvA(4)-RuvB(12)-RuvC(2) complex forms which resolves the HJ.

It is found in the cytoplasm. Functionally, the RuvA-RuvB-RuvC complex processes Holliday junction (HJ) DNA during genetic recombination and DNA repair, while the RuvA-RuvB complex plays an important role in the rescue of blocked DNA replication forks via replication fork reversal (RFR). RuvA specifically binds to HJ cruciform DNA, conferring on it an open structure. The RuvB hexamer acts as an ATP-dependent pump, pulling dsDNA into and through the RuvAB complex. HJ branch migration allows RuvC to scan DNA until it finds its consensus sequence, where it cleaves and resolves the cruciform DNA. In Shewanella woodyi (strain ATCC 51908 / MS32), this protein is Holliday junction branch migration complex subunit RuvA.